A 237-amino-acid chain; its full sequence is Phosphoribosylaminoimidazole-succinocarboxamide synthase (237 aa).

This sequence belongs to the SAICAR synthetase family.

The catalysed reaction is 5-amino-1-(5-phospho-D-ribosyl)imidazole-4-carboxylate + L-aspartate + ATP = (2S)-2-[5-amino-1-(5-phospho-beta-D-ribosyl)imidazole-4-carboxamido]succinate + ADP + phosphate + 2 H(+). It functions in the pathway purine metabolism; IMP biosynthesis via de novo pathway; 5-amino-1-(5-phospho-D-ribosyl)imidazole-4-carboxamide from 5-amino-1-(5-phospho-D-ribosyl)imidazole-4-carboxylate: step 1/2. This Pectobacterium atrosepticum (strain SCRI 1043 / ATCC BAA-672) (Erwinia carotovora subsp. atroseptica) protein is Phosphoribosylaminoimidazole-succinocarboxamide synthase.